Consider the following 550-residue polypeptide: Chaperonin GroEL (550 aa).

ATP contacts are provided by residues 30-33 (TLGP), Lys51, 87-91 (DGTTT), Gly415, 479-481 (NAA), and Asp495.

The protein belongs to the chaperonin (HSP60) family. In terms of assembly, forms a cylinder of 14 subunits composed of two heptameric rings stacked back-to-back. Interacts with the co-chaperonin GroES.

The protein localises to the cytoplasm. The enzyme catalyses ATP + H2O + a folded polypeptide = ADP + phosphate + an unfolded polypeptide.. Its function is as follows. Together with its co-chaperonin GroES, plays an essential role in assisting protein folding. The GroEL-GroES system forms a nano-cage that allows encapsulation of the non-native substrate proteins and provides a physical environment optimized to promote and accelerate protein folding. This Marinobacter nauticus (strain ATCC 700491 / DSM 11845 / VT8) (Marinobacter aquaeolei) protein is Chaperonin GroEL.